A 545-amino-acid chain; its full sequence is uncharacterized protein (545 aa).

2 disordered regions span residues 1–162 and 200–250; these read MSSG…DPQE and YPPV…EPPP. The segment covering 86 to 100 has biased composition (polar residues); that stretch reads NYRSHSSADYLTPNS. 2 stretches are compositionally biased toward low complexity: residues 109–128 and 141–152; these read TTPR…TATK and SGASTSSGTSST. Composition is skewed to polar residues over residues 212-221 and 228-244; these read SSRTGTLQRT and ISST…QMQS. In terms of domain architecture, PDZ spans 458–540; the sequence is RVLVEKMMPG…VTITLLPAVG (83 aa).

This is an uncharacterized protein from Caenorhabditis elegans.